Reading from the N-terminus, the 462-residue chain is Gamma-aminobutyric acid receptor subunit alpha-5 (462 aa).

An N-terminal signal peptide occupies residues 1–31 (MDNGMFSSFIMIKNLLLFCISMNLASHFGFS). Residues 32-260 (QMPTSSVKAE…FHLKRKIGYF (229 aa)) are Extracellular-facing. N-linked (GlcNAc...) asparagine glycosylation is present at asparagine 45. Arginine 101 lines the 4-aminobutanoate pocket. A glycan (N-linked (GlcNAc...) asparagine) is linked at asparagine 145. A 4-aminobutanoate-binding site is contributed by threonine 164. A disulfide bridge links cysteine 173 with cysteine 187. N-linked (GlcNAc...) asparagine glycosylation is found at asparagine 207 and asparagine 236. The next 3 helical transmembrane spans lie at 261 to 281 (VIQTYLPCIMTVILSQVSFWL), 287 to 308 (PARTVFGVTTVLTMTTLSISAR), and 319 to 340 (AMDWFIAVCYAFVFSALIEFAT). The Cytoplasmic portion of the chain corresponds to 341-427 (VNYFTKRGWA…TYNSISKIDK (87 aa)). A Glycyl lysine isopeptide (Lys-Gly) (interchain with G-Cter in ubiquitin) cross-link involves residue lysine 355. The interval 375 to 412 (TNAYTTGKMTHPPNIPKEQTPAGTTNASSASVKPEDKA) is disordered. Polar residues predominate over residues 395–405 (PAGTTNASSAS). A helical membrane pass occupies residues 428 to 448 (MSRIIFPLLFGTFNLVYWATY).

This sequence belongs to the ligand-gated ion channel (TC 1.A.9) family. Gamma-aminobutyric acid receptor (TC 1.A.9.5) subfamily. GABRA5 sub-subfamily. As to quaternary structure, heteropentamer, formed by a combination of alpha (GABRA1-6), beta (GABRB1-3), gamma (GABRG1-3), delta (GABRD), epsilon (GABRE), rho (GABRR1-3), pi (GABRP) and theta (GABRQ) chains, each subunit exhibiting distinct physiological and pharmacological properties.

The protein resides in the postsynaptic cell membrane. The protein localises to the cell membrane. The catalysed reaction is chloride(in) = chloride(out). Functionally, alpha subunit of the heteropentameric ligand-gated chloride channel gated by gamma-aminobutyric acid (GABA), a major inhibitory neurotransmitter in the brain. GABA-gated chloride channels, also named GABA(A) receptors (GABAAR), consist of five subunits arranged around a central pore and contain GABA active binding site(s) located at the alpha and beta subunit interface(s). When activated by GABA, GABAARs selectively allow the flow of chloride anions across the cell membrane down their electrochemical gradient. GABAARs containing alpha-5/GABRA5 subunits are mainly extrasynaptic and contribute to the tonic GABAergic inhibition in the hippocampus. Extrasynaptic alpha-5-containing GABAARs in CA1 pyramidal neurons play a role in learning and memory processes. This is Gamma-aminobutyric acid receptor subunit alpha-5 (GABRA5) from Bos taurus (Bovine).